A 624-amino-acid chain; its full sequence is Chaperone protein DnaK (624 aa).

Thr-174 carries the post-translational modification Phosphothreonine; by autocatalysis. Disordered stretches follow at residues 470–504 (ITIK…KEEV) and 577–624 (NGGA…DPDK). The segment covering 481–504 (EEIKKMQKDAEEHAEEDKKRKEEV) has biased composition (basic and acidic residues). A compositionally biased stretch (low complexity) spans 577-605 (NGGAQGAAGQAGPQGPQNGGQPNNDNGSD). Positions 615 to 624 (GDFHKVDPDK) are enriched in basic and acidic residues.

It belongs to the heat shock protein 70 family.

Functionally, acts as a chaperone. The chain is Chaperone protein DnaK from Lactobacillus johnsonii (strain CNCM I-12250 / La1 / NCC 533).